The primary structure comprises 491 residues: Chromosomal replication initiator protein DnaA (491 aa).

The tract at residues 1-86 (MTDELNSQFT…VEALSRRLGE (86 aa)) is domain I, interacts with DnaA modulators. The tract at residues 86–150 (ENVELGVRIA…GADKAETPDT (65 aa)) is domain II. The domain III, AAA+ region stretch occupies residues 151-367 (SLNARYTFES…GALIRVTAFA (217 aa)). Residues Gly-195, Gly-197, Lys-198, and Thr-199 each coordinate ATP. Residues 368–491 (SLNKSPIELS…TARIRQRSRH (124 aa)) are domain IV, binds dsDNA.

Belongs to the DnaA family. As to quaternary structure, oligomerizes as a right-handed, spiral filament on DNA at oriC.

Its subcellular location is the cytoplasm. Plays an essential role in the initiation and regulation of chromosomal replication. ATP-DnaA binds to the origin of replication (oriC) to initiate formation of the DNA replication initiation complex once per cell cycle. Binds the DnaA box (a 9 base pair repeat at the origin) and separates the double-stranded (ds)DNA. Forms a right-handed helical filament on oriC DNA; dsDNA binds to the exterior of the filament while single-stranded (ss)DNA is stabiized in the filament's interior. The ATP-DnaA-oriC complex binds and stabilizes one strand of the AT-rich DNA unwinding element (DUE), permitting loading of DNA polymerase. After initiation quickly degrades to an ADP-DnaA complex that is not apt for DNA replication. Binds acidic phospholipids. The sequence is that of Chromosomal replication initiator protein DnaA from Mycobacteroides abscessus (strain ATCC 19977 / DSM 44196 / CCUG 20993 / CIP 104536 / JCM 13569 / NCTC 13031 / TMC 1543 / L948) (Mycobacterium abscessus).